We begin with the raw amino-acid sequence, 277 residues long: NH(3)-dependent NAD(+) synthetase (277 aa).

46-53 (GISGGQDS) is an ATP binding site. Position 52 (Asp-52) interacts with Mg(2+). Position 142 (Arg-142) interacts with deamido-NAD(+). Thr-162 contributes to the ATP binding site. Glu-167 is a binding site for Mg(2+). Deamido-NAD(+) contacts are provided by Lys-175 and Asp-182. Residues Lys-191 and Thr-213 each coordinate ATP. 263–264 (HK) contacts deamido-NAD(+).

The protein belongs to the NAD synthetase family. In terms of assembly, homodimer.

The enzyme catalyses deamido-NAD(+) + NH4(+) + ATP = AMP + diphosphate + NAD(+) + H(+). The protein operates within cofactor biosynthesis; NAD(+) biosynthesis; NAD(+) from deamido-NAD(+) (ammonia route): step 1/1. Functionally, catalyzes the ATP-dependent amidation of deamido-NAD to form NAD. Uses ammonia as a nitrogen source. In Corynebacterium glutamicum (strain ATCC 13032 / DSM 20300 / JCM 1318 / BCRC 11384 / CCUG 27702 / LMG 3730 / NBRC 12168 / NCIMB 10025 / NRRL B-2784 / 534), this protein is NH(3)-dependent NAD(+) synthetase.